The sequence spans 140 residues: Putative pre-16S rRNA nuclease (140 aa).

Belongs to the YqgF nuclease family.

The protein localises to the cytoplasm. Could be a nuclease involved in processing of the 5'-end of pre-16S rRNA. This is Putative pre-16S rRNA nuclease from Yersinia enterocolitica serotype O:8 / biotype 1B (strain NCTC 13174 / 8081).